A 336-amino-acid chain; its full sequence is MYYPLVKKALFQLDPERAHEFTFRQLKRLTGTPLQFLVSQSVPTKPVSCMGLSFKNPLGLAAGLDKDGECIDALGAMGFGFIEVGTVTPKPQSGNDKPRLFRIVEAEGLINRMGFNNHGVDNLIENVKKSHFGGILGINIGKNKDTPVEQGKEDYLICMDKVYPYAGYIAINISSPNTPGLRSLQYGEALDDLLAAIKNKQTELHQRHHKYVPVAVKIAPDLTEEELIQIADSLVRHNIDGVIATNTTLDRSLIQGLNYCEQAGGLSGRPLQLRSTEVIRRLSQELQGRLPIIGVGGIDSVTAAREKMAAGASLIQIYSGFIFRGPGLIKNIVTHI.

Residues 62–66 (AGLDK) and Thr-86 each bind FMN. Lys-66 serves as a coordination point for substrate. 111–115 (NRMGF) serves as a coordination point for substrate. The FMN site is built by Asn-139 and Asn-172. Asn-172 serves as a coordination point for substrate. Ser-175 (nucleophile) is an active-site residue. Asn-177 contacts substrate. FMN is bound by residues Lys-217 and Thr-245. 246–247 (NT) provides a ligand contact to substrate. FMN is bound by residues Gly-268, Gly-297, and 318–319 (YS).

Belongs to the dihydroorotate dehydrogenase family. Type 2 subfamily. As to quaternary structure, monomer. FMN serves as cofactor.

It is found in the cell membrane. It catalyses the reaction (S)-dihydroorotate + a quinone = orotate + a quinol. It functions in the pathway pyrimidine metabolism; UMP biosynthesis via de novo pathway; orotate from (S)-dihydroorotate (quinone route): step 1/1. In terms of biological role, catalyzes the conversion of dihydroorotate to orotate with quinone as electron acceptor. The chain is Dihydroorotate dehydrogenase (quinone) from Yersinia enterocolitica serotype O:8 / biotype 1B (strain NCTC 13174 / 8081).